We begin with the raw amino-acid sequence, 249 residues long: EID1-like F-box protein 2 (249 aa).

The region spanning 16 to 68 (HCTKGHLSEEVLFLMVQHLNWNPNVIATLSCVCKWFDDLAKRLLWKEFCRARA) is the F-box domain.

The polypeptide is EID1-like F-box protein 2 (EDL2) (Arabidopsis thaliana (Mouse-ear cress)).